The chain runs to 191 residues: Rubrerythrin (191 aa).

In terms of domain architecture, Ferritin-like diiron spans 1–146 (MKSLKGSRTE…DFARNIKEGR (146 aa)). Glu-20, Glu-53, Glu-94, Glu-97, Glu-128, His-131, Cys-158, Cys-161, Cys-174, and Cys-177 together coordinate Fe(3+). Residues 153–191 (ATKWRCRNCGYVHEGTGAPELCPACAHPKAHFELLGINW) form the Rubredoxin-like domain.

As to quaternary structure, homodimer. Possesses two rubredoxin-like centers and two non-sulfur oxo-bridged di-iron centers per dimer. Fe(3+) serves as cofactor.

It is found in the cytoplasm. Functionally, may provide oxidative stress protection via catalytic reduction of intracellular hydrogen peroxide. The polypeptide is Rubrerythrin (rbr) (Nitratidesulfovibrio vulgaris (strain ATCC 29579 / DSM 644 / CCUG 34227 / NCIMB 8303 / VKM B-1760 / Hildenborough) (Desulfovibrio vulgaris)).